We begin with the raw amino-acid sequence, 182 residues long: Mesencephalic astrocyte-derived neurotrophic factor (182 aa).

The first 24 residues, 1-24 (MRRMWATQGLAVALALSVLPGSRA), serve as a signal peptide directing secretion. 4 cysteine pairs are disulfide-bonded: cysteine 30/cysteine 117, cysteine 33/cysteine 106, cysteine 64/cysteine 75, and cysteine 151/cysteine 154. Residue tyrosine 76 is modified to Phosphotyrosine. Residues 96-158 (LAHHIPVEKI…ETCKGCAEKS (63 aa)) are interacts with ERN1, EIF2AK3 and ATF6. The interacts with HSPA5 stretch occupies residues 129–172 (TVDLKKLRVKELKKILDDWGETCKGCAEKSDYIRKINELMPKYA).

The protein belongs to the ARMET family. In terms of assembly, interacts directly (via SAP domain) with HSPA5/BiP; the interaction inhibits ATP binding to HSPA5/BiP and subsequent nucleotide exchange. Component of a complex containing at least CRELD2, MANF, MATN3 and PDIA4. Interacts (via C-terminus) with ERN1 (via luminal domain); the interaction is decreased in the presence of increasing concentrations of Ca(2+). Post-translationally, may contain sialic acid residues.

Its subcellular location is the secreted. It localises to the endoplasmic reticulum lumen. The protein resides in the sarcoplasmic reticulum lumen. Functionally, selectively promotes the survival of dopaminergic neurons of the ventral mid-brain. Modulates GABAergic transmission to the dopaminergic neurons of the substantia nigra. Enhances spontaneous, as well as evoked, GABAergic inhibitory postsynaptic currents in dopaminergic neurons. Inhibits cell proliferation and endoplasmic reticulum (ER) stress-induced cell death. Retained in the ER/sarcoplasmic reticulum (SR) through association with the endoplasmic reticulum chaperone protein HSPA5 under normal conditions. Stabilizes HSPA5/BiP in its substrate-bound ADP state, which facilitates HSPA5/BiP incorporation into chaperone-client complexes during endoplasmic reticulum stress, its interaction with HSPA5/BiP inhibits ATP binding to HSPA5/BiP and subsequent nucleotide exchange. As a result acts as a repressor of the unfolded protein response (UPR) pathway. Up-regulated and secreted by the ER/SR in response to ER stress and hypoxia. Following secretion by the ER/SR, directly binds to 3-O-sulfogalactosylceramide, a lipid sulfatide in the outer cell membrane of target cells. Sulfatide binding promotes its cellular uptake by endocytosis, and is required for its role in alleviating ER stress and cell toxicity under hypoxic and ER stress conditions. Essential for embryonic lung development. Required for the correct postnatal temporal and structural development of splenic white pulp. Required for the repair-associated myeloid response in skeletal muscle, acts as a regulator of phenotypic transition towards prorepair macrophages in response to muscle injury and as a result limits excessive proinflammatory signaling. Represses RELA expression and therefore NF-kB signaling in the myocardium, as a result limits macrophage infiltration of injured tissue and M1 macrophage differentiation in response to myocardial injury. Required for endochondral ossification in long bones and the skull during postnatal development. This is Mesencephalic astrocyte-derived neurotrophic factor from Homo sapiens (Human).